A 374-amino-acid polypeptide reads, in one-letter code: MIFLIFSFIVLLIFGLANVYIYKRLIKKITLFKYFYKIFSFIFIVLFLAQAVFLIFRRDEYLSDTWYEILAMFYAPTYCLFFMTLAWDFVKLILALMGKRDKTYNLILRLIFELSLIVLSVFLIYASINNALKTPEVKSVDVEIPNLKKDLKIVMLTDIHLGKNLHENFLDKLITKVNLQSPDMVVIVGDLIDTNPKDLKNYISKLNDFNSTYGTFYALGNHEYYHGINEVLDLLRKHTNMKILVNQNLDLGFIDIAGLGDLAGLDRGLYAPDLARIKVDLNTSKASILLTHQPKTALLYDLSDFDLVLSGHTHGGQIFPFMFLVKLQQGFVHGLYDLGEKTKLYVSSGAGFWGPSLRVFAPSEIVILNLKGKK.

Residues Asp158, His160, Asp190, Asn221, His312, and His314 each contribute to the a divalent metal cation site.

Belongs to the metallophosphoesterase superfamily. A divalent metal cation is required as a cofactor.

This is an uncharacterized protein from Campylobacter jejuni subsp. jejuni serotype O:2 (strain ATCC 700819 / NCTC 11168).